A 641-amino-acid polypeptide reads, in one-letter code: ATP-dependent zinc metalloprotease FtsH 2 (641 aa).

Residues 1–100 (MLAYYVSVNQ…IDVKVIHNFW (100 aa)) lie on the Periplasmic side of the membrane. The helical transmembrane segment at 101–121 (GQAFLSVLPFLLFILALYFLF) threads the bilayer. Residues 122–641 (RQQIRMAGRG…LLPGLEGAPA (520 aa)) are Cytoplasmic-facing. 193 to 200 (GPPGTGKT) contributes to the ATP binding site. Residue His415 participates in Zn(2+) binding. Residue Glu416 is part of the active site. Zn(2+) is bound by residues His419 and Asp491. Positions 593-641 (KTGKMTNPPSKNSSPVSNGGEASSTKSPARQEETTKDGGLLPGLEGAPA) are disordered. 2 stretches are compositionally biased toward low complexity: residues 599-610 (NPPSKNSSPVSN) and 630-641 (GGLLPGLEGAPA).

This sequence in the central section; belongs to the AAA ATPase family. The protein in the C-terminal section; belongs to the peptidase M41 family. Homohexamer. Zn(2+) is required as a cofactor.

It localises to the cell inner membrane. Acts as a processive, ATP-dependent zinc metallopeptidase for both cytoplasmic and membrane proteins. Plays a role in the quality control of integral membrane proteins. In Methylacidiphilum infernorum (isolate V4) (Methylokorus infernorum (strain V4)), this protein is ATP-dependent zinc metalloprotease FtsH 2.